Here is a 165-residue protein sequence, read N- to C-terminus: 2S seed storage protein 5 (165 aa).

Residues 1-20 form the signal peptide; sequence MAKLILVFATLALFILLANA. Propeptides lie at residues 21 to 37 and 71 to 89; these read SIYR…DVSN and YEAD…DDEN.

The protein belongs to the 2S seed storage albumins family. As to quaternary structure, the mature protein consists of a small and a large chain linked by disulfide bonds.

This is a 2S seed storage protein. In Arabidopsis thaliana (Mouse-ear cress), this protein is 2S seed storage protein 5 (SESA5).